The following is a 308-amino-acid chain: Dipeptide transport system permease protein DppB (308 aa).

A run of 7 helical transmembrane segments spans residues 10 to 30 (WAMA…MKVI), 59 to 79 (LIFQ…GPSI), 100 to 120 (LGMT…VIAA), 131 to 151 (AMSL…TLLI), 168 to 188 (SPIH…AIIA), 228 to 248 (MPVI…SFVI), and 278 to 298 (VFYS…YGLL). The ABC transmembrane type-1 domain occupies 94 to 295 (FPVSFELGMT…IMLFLVDLAY (202 aa)).

It belongs to the binding-protein-dependent transport system permease family. OppBC subfamily.

The protein localises to the cell membrane. In terms of biological role, probably part of the ABC transporter DppBCDE involved in dipeptide transport. Responsible for the translocation of the substrate across the membrane. This Bacillus subtilis (strain 168) protein is Dipeptide transport system permease protein DppB (dppB).